A 200-amino-acid polypeptide reads, in one-letter code: Potassium-transporting ATPase KdpC subunit (200 aa).

The helical transmembrane segment at 7–27 (PALVMIVLFTILTGLIYPLAM) threads the bilayer.

The protein belongs to the KdpC family. As to quaternary structure, the system is composed of three essential subunits: KdpA, KdpB and KdpC.

Its subcellular location is the cell inner membrane. Part of the high-affinity ATP-driven potassium transport (or Kdp) system, which catalyzes the hydrolysis of ATP coupled with the electrogenic transport of potassium into the cytoplasm. This subunit acts as a catalytic chaperone that increases the ATP-binding affinity of the ATP-hydrolyzing subunit KdpB by the formation of a transient KdpB/KdpC/ATP ternary complex. The protein is Potassium-transporting ATPase KdpC subunit of Methylocella silvestris (strain DSM 15510 / CIP 108128 / LMG 27833 / NCIMB 13906 / BL2).